The primary structure comprises 389 residues: Succinate--CoA ligase [ADP-forming] subunit beta (389 aa).

Residues 9-236 (KELFAKHEVP…KDATDPLELK (228 aa)) form the ATP-grasp domain. Residues lysine 45, 52-54 (GRG), serine 94, and glutamate 99 each bind ATP. The Mg(2+) site is built by asparagine 191 and aspartate 205. Substrate is bound by residues asparagine 256 and 318–320 (GIT).

Belongs to the succinate/malate CoA ligase beta subunit family. In terms of assembly, heterotetramer of two alpha and two beta subunits. It depends on Mg(2+) as a cofactor.

The catalysed reaction is succinate + ATP + CoA = succinyl-CoA + ADP + phosphate. It carries out the reaction GTP + succinate + CoA = succinyl-CoA + GDP + phosphate. It participates in carbohydrate metabolism; tricarboxylic acid cycle; succinate from succinyl-CoA (ligase route): step 1/1. Functionally, succinyl-CoA synthetase functions in the citric acid cycle (TCA), coupling the hydrolysis of succinyl-CoA to the synthesis of either ATP or GTP and thus represents the only step of substrate-level phosphorylation in the TCA. The beta subunit provides nucleotide specificity of the enzyme and binds the substrate succinate, while the binding sites for coenzyme A and phosphate are found in the alpha subunit. The sequence is that of Succinate--CoA ligase [ADP-forming] subunit beta from Rhodococcus opacus (strain B4).